The primary structure comprises 189 residues: uncharacterized protein (189 aa).

The next 4 helical transmembrane spans lie at 20 to 40 (FILGSVIFVEFFIFGLVYLTF), 46 to 66 (TIIITSGVILICLLPISIILI), 100 to 120 (VLLFIVGINFYLFGNLVSLNI), and 126 to 146 (FVLYSISAFFIIISIVVGDVI).

It to M.jannaschii MJ0795.1 and MJ1249.1.

It localises to the cell membrane. This is an uncharacterized protein from Methanocaldococcus jannaschii (strain ATCC 43067 / DSM 2661 / JAL-1 / JCM 10045 / NBRC 100440) (Methanococcus jannaschii).